Reading from the N-terminus, the 566-residue chain is Urease subunit alpha 2 (566 aa).

One can recognise a Urease domain in the interval 128-566; sequence GGVDTHIHFI…LPMAQRYFLF (439 aa). His-133, His-135, and Lys-216 together coordinate Ni(2+). Lys-216 carries the N6-carboxylysine modification. His-218 contacts substrate. Ni(2+) is bound by residues His-245 and His-271. His-319 serves as the catalytic Proton donor. Asp-359 is a binding site for Ni(2+).

This sequence belongs to the metallo-dependent hydrolases superfamily. Urease alpha subunit family. May form a heterohexamer of 3 UreC (alpha) and 3 UreAB (gamma/beta) subunits. May also form a heterotrimer of UreA (gamma), UreB (beta) and UreC (alpha) subunits. Three heterotrimers associate to form the active enzyme. Ni cation serves as cofactor. Post-translationally, carboxylation allows a single lysine to coordinate two nickel ions.

The protein resides in the cytoplasm. It catalyses the reaction urea + 2 H2O + H(+) = hydrogencarbonate + 2 NH4(+). It functions in the pathway nitrogen metabolism; urea degradation; CO(2) and NH(3) from urea (urease route): step 1/1. The sequence is that of Urease subunit alpha 2 from Pseudomonas syringae pv. syringae (strain B728a).